The following is a 256-amino-acid chain: Small ribosomal subunit protein uS3 (256 aa).

The KH type-2 domain occupies 39–121 (IRTYLTKQLS…TIRINVVEVT (83 aa)). Residues 227-256 (RHEQKFPLQQPKRRQQRRRPTFEDRSAQEA) form a disordered region. Over residues 246 to 256 (PTFEDRSAQEA) the composition is skewed to basic and acidic residues.

The protein belongs to the universal ribosomal protein uS3 family. In terms of assembly, part of the 30S ribosomal subunit. Forms a tight complex with proteins S10 and S14.

Binds the lower part of the 30S subunit head. Binds mRNA in the 70S ribosome, positioning it for translation. This is Small ribosomal subunit protein uS3 from Synechococcus sp. (strain JA-2-3B'a(2-13)) (Cyanobacteria bacterium Yellowstone B-Prime).